Here is a 92-residue protein sequence, read N- to C-terminus: uncharacterized protein (92 aa).

A signal peptide spans 1 to 29 (MAAQTDYKKQVVGILLSLAFVLFVFSFSE).

This is an uncharacterized protein from Bacillus subtilis (strain 168).